We begin with the raw amino-acid sequence, 401 residues long: Argininosuccinate synthase (401 aa).

Residue 9 to 17 (AYSGGLDTS) coordinates ATP. Tyrosine 86 lines the L-citrulline pocket. Glycine 116 contributes to the ATP binding site. Threonine 118, asparagine 122, and aspartate 123 together coordinate L-aspartate. Asparagine 122 provides a ligand contact to L-citrulline. L-citrulline-binding residues include arginine 126, serine 174, serine 183, glutamate 259, and tyrosine 271.

This sequence belongs to the argininosuccinate synthase family. Type 1 subfamily. As to quaternary structure, homotetramer.

The protein resides in the cytoplasm. The catalysed reaction is L-citrulline + L-aspartate + ATP = 2-(N(omega)-L-arginino)succinate + AMP + diphosphate + H(+). It functions in the pathway amino-acid biosynthesis; L-arginine biosynthesis; L-arginine from L-ornithine and carbamoyl phosphate: step 2/3. The chain is Argininosuccinate synthase from Bacillus thuringiensis subsp. konkukian (strain 97-27).